A 901-amino-acid chain; its full sequence is Phosphatidylinositol 3-kinase catalytic subunit type 3 (901 aa).

One can recognise a C2 PI3K-type domain in the interval 21-189; sequence LQTNVQVKVA…DLLFKQVTRQ (169 aa). The PIK helical domain occupies 302 to 527; sequence RHRQVKPNKQ…SKMYQNIQDR (226 aa). A PI3K/PI4K catalytic domain is found at 607–886; the sequence is IPDTASFFKS…QIESSLNAKM (280 aa). Residues 613–619 are G-loop; sequence FFKSEMM. Residues 755-763 form a catalytic loop region; sequence GLGDRHLDN. Residues 774 to 795 are activation loop; that stretch reads HVDFGFILGRDPKPMPPPMKLT.

Belongs to the PI3/PI4-kinase family. Interacts with bec-1. May interact with dyn-1. Mn(2+) serves as cofactor. As to expression, ubiquitous.

It localises to the nucleus outer membrane. The protein localises to the cytoplasm. Its subcellular location is the cytoplasmic granule. The protein resides in the cell projection. It is found in the phagocytic cup. The enzyme catalyses a 1,2-diacyl-sn-glycero-3-phospho-(1D-myo-inositol) + ATP = a 1,2-diacyl-sn-glycero-3-phospho-(1D-myo-inositol-3-phosphate) + ADP + H(+). With respect to regulation, inhibited by wortmannin. Functionally, catalytic subunit of the PI3K complex that mediates formation of phosphatidylinositol 3-phosphate. Together with bec-1, mediates the production of phosphatidylinositol 3-phosphate on intracellular vesicles and thereby regulates membrane trafficking. Plays a role in endosome-to-Golgi retrograde transport of mig-14. Involved in clearance of apoptotic cell corpses by phagosomes. Phagosome maturation requires two sequential and non-overlapping pulses of phosphatidylinositol-3-phosphate (PI3P) on the vesicle surface which mediates recruitment of sortins snx-1 and lst-4 and small GTPases rab-5, rab-2 and rab-7, downstream of dynamin dyn-1. The first pulse is initiated by piki-1, then maintained by vps-34 which also produces the second pulse. Required for embryonic development. Together with bec-1, involved in L3/L4 larval molting stage probably by regulating cuticle shedding. Regulates the expansion of the nucleus outer membrane. Involved in the secretion and localization of lrp-1 at the apical surface of hyp7 syncytium. May regulate endocytosis in hypodermal cells. May play a role in the formation of gut granules (a lysosome-related organelle). Plays a role in germ stem cell proliferation during larval development. The protein is Phosphatidylinositol 3-kinase catalytic subunit type 3 of Caenorhabditis elegans.